Here is a 1171-residue protein sequence, read N- to C-terminus: ATP-dependent helicase/deoxyribonuclease subunit B (1171 aa).

A UvrD-like helicase ATP-binding domain is found at methionine 1–arginine 343. Residue glycine 8–serine 15 participates in ATP binding. The UvrD-like helicase C-terminal domain maps to methionine 281–aspartate 587. [4Fe-4S] cluster contacts are provided by cysteine 805, cysteine 1129, cysteine 1132, and cysteine 1138.

Belongs to the helicase family. AddB/RexB type 1 subfamily. Heterodimer of AddA and AddB. It depends on Mg(2+) as a cofactor. [4Fe-4S] cluster is required as a cofactor.

Functionally, the heterodimer acts as both an ATP-dependent DNA helicase and an ATP-dependent, dual-direction single-stranded exonuclease. Recognizes the chi site generating a DNA molecule suitable for the initiation of homologous recombination. The AddB subunit has 5' -&gt; 3' nuclease activity but not helicase activity. This Bacillus cereus (strain AH187) protein is ATP-dependent helicase/deoxyribonuclease subunit B.